Consider the following 462-residue polypeptide: Nuclear factor interleukin-3-regulated protein (462 aa).

Lysine 24 participates in a covalent cross-link: Glycyl lysine isopeptide (Lys-Gly) (interchain with G-Cter in SUMO2). A bZIP domain is found at 73 to 136; it reads DAMYWEKRRK…GLISSTAYAQ (64 aa). The basic motif stretch occupies residues 79–95; that stretch reads KRRKNNEAAKRSREKRR. The segment at 99 to 106 is leucine-zipper; that stretch reads LVLENKLI. 2 disordered regions span residues 189–236 and 254–303; these read DVSE…RDDR and GYSH…HSPV. Residue lysine 214 forms a Glycyl lysine isopeptide (Lys-Gly) (interchain with G-Cter in SUMO2) linkage. Lysine 219 participates in a covalent cross-link: Glycyl lysine isopeptide (Lys-Gly) (interchain with G-Cter in SUMO1); alternate. Lysine 219 participates in a covalent cross-link: Glycyl lysine isopeptide (Lys-Gly) (interchain with G-Cter in SUMO2); alternate. Residues 227–236 show a composition bias toward basic and acidic residues; the sequence is SYAREPRDDR. Residues 264-274 are compositionally biased toward polar residues; sequence VNRSSSNSPRT. Serine 301 bears the Phosphoserine mark. Glycyl lysine isopeptide (Lys-Gly) (interchain with G-Cter in SUMO2) cross-links involve residues lysine 314, lysine 326, lysine 332, lysine 337, and lysine 350. Position 353 is a phosphoserine (serine 353). Glycyl lysine isopeptide (Lys-Gly) (interchain with G-Cter in SUMO2) cross-links involve residues lysine 360, lysine 394, lysine 401, lysine 406, lysine 412, lysine 419, lysine 424, lysine 434, and lysine 448.

The protein belongs to the bZIP family. NFIL3 subfamily. In terms of assembly, homodimer. Binds DNA as a dimer. Interacts with CRY2, DR1 and PER2. Interacts with NR0B2. Interacts with MYSM1.

It is found in the nucleus. Its function is as follows. Acts as a transcriptional regulator that recognizes and binds to the sequence 5'-[GA]TTA[CT]GTAA[CT]-3', a sequence present in many cellular and viral promoters. Represses transcription from promoters with activating transcription factor (ATF) sites. Represses promoter activity in osteoblasts. Represses transcriptional activity of PER1. Represses transcriptional activity of PER2 via the B-site on the promoter. Activates transcription from the interleukin-3 promoter in T-cells. Competes for the same consensus-binding site with PAR DNA-binding factors (DBP, HLF and TEF). Component of the circadian clock that acts as a negative regulator for the circadian expression of PER2 oscillation in the cell-autonomous core clock. Protects pro-B cells from programmed cell death. Represses the transcription of CYP2A5. Positively regulates the expression and activity of CES2 by antagonizing the repressive action of NR1D1 on CES2. Required for the development of natural killer cell precursors. This is Nuclear factor interleukin-3-regulated protein (NFIL3) from Bos taurus (Bovine).